Reading from the N-terminus, the 388-residue chain is tRNA (guanine(26)-N(2))-dimethyltransferase (388 aa).

Residues 4-383 (RTIVEGTTKI…APIAEIKKII (380 aa)) form the Trm1 methyltransferase domain. Residues R41, R78, D94, and A123 each contribute to the S-adenosyl-L-methionine site. C251, C254, C271, and C274 together coordinate Zn(2+).

The protein belongs to the class I-like SAM-binding methyltransferase superfamily. Trm1 family.

The catalysed reaction is guanosine(26) in tRNA + 2 S-adenosyl-L-methionine = N(2)-dimethylguanosine(26) in tRNA + 2 S-adenosyl-L-homocysteine + 2 H(+). Dimethylates a single guanine residue at position 26 of a number of tRNAs using S-adenosyl-L-methionine as donor of the methyl groups. This Methanosarcina acetivorans (strain ATCC 35395 / DSM 2834 / JCM 12185 / C2A) protein is tRNA (guanine(26)-N(2))-dimethyltransferase.